Reading from the N-terminus, the 87-residue chain is MRQGIHPEYHKVIFLDTTTNFKFLSGSTKTSSETMEWEDGNEYPVIRLDISSDSHPFYTGRQKFAAADGRVERFNKKFGLKSSNDNE.

Belongs to the bacterial ribosomal protein bL31 family. Type B subfamily. As to quaternary structure, part of the 50S ribosomal subunit.

This is Large ribosomal subunit protein bL31B from Staphylococcus carnosus (strain TM300).